The primary structure comprises 843 residues: MSLISAVEDRDIHNIGKTSGGGSRTSSITSSKKSLKHGSKSLRKPKVYQTTGELLSREALYKAKLKYGVYQSPAQSYSIGVSDAHAASDKAANLAHDNQTTVEAYKRMFIDPNATKAASKMGPKVVRNNSITSATSKTSKESQTKRKSKESPGAAASKAYSMTMETTSLSSQTNSRSYSITSASSVLSGASGSFNSTVNPKPKTLNLEKVLVGAEKKAESRIKERWEPEKTNFQYGVKTDEHGNLNQFSFSNEMMNNIMAKVDAPKAQDLQKVKKVSAEKEAKSMKFALGAANAVKDMHPGEDIDKSIALKAQKRETYLSQLTSQQVLTLARANVDRQLDIIEKSDMHRKLFTNMEYNKAAVAVAQSNHQKKTEFHNKINMGGGLFLSPEDITKIASGLISPVLGEVSERAEAQRAMDEEIAERTEAYNKSLNEWETMERSIISNDAKVLTTTANRHQTEKKTSQEKIKASFDALVARMDTKVAERETLLEDTKSKEIEFKKQMQQELKDEKARLDQDLEEWGKKCEQDITEARKEQEELLKPYHDDLANAEAEHKTLVEERDEINAEISRLQDAIVDHKRKISGYGNDLDAQKNRNIREDDKLLELGQTKESLESHLNDDVIILANKAKEQAELSTKEARLKQLEVDSLINERKSELNATEIELKKEKLNLLEAMKDVASARGDDKIDEEKVKKLIGMTSEEYLTQNKSVEKNVEDLPTQLEKIEEGDELKKEEIVGAETKNSGGDGVPVSTAAKEATETSSAVQTKEPEEKISIGNKSSGKEDANDCKSAEHSKEISVSQKAGNNKSLGVSPDSLEHTFSGFSQGSSIEDDQDAISNQEKK.

Ser2 is modified (N-acetylserine). At Ser2 the chain carries Phosphoserine. Positions 13-44 (HNIGKTSGGGSRTSSITSSKKSLKHGSKSLRK) are disordered. Positions 33 to 44 (KSLKHGSKSLRK) are enriched in basic residues. Residues Ser88 and Ser130 each carry the phosphoserine modification. The disordered stretch occupies residues 120-174 (KMGPKVVRNNSITSATSKTSKESQTKRKSKESPGAAASKAYSMTMETTSLSSQTN). Polar residues-rich tracts occupy residues 127 to 137 (RNNSITSATSK) and 163 to 174 (TMETTSLSSQTN). Phosphoserine is present on residues Ser182, Ser401, Ser584, and Ser710. The interval 717-843 (DLPTQLEKIE…QDAISNQEKK (127 aa)) is disordered. Phosphothreonine is present on Thr720. A compositionally biased stretch (low complexity) spans 752–764 (STAAKEATETSSA). 2 positions are modified to phosphoserine: Ser763 and Ser775. A compositionally biased stretch (basic and acidic residues) spans 781–797 (SGKEDANDCKSAEHSKE). Residues 798–810 (ISVSQKAGNNKSL) show a composition bias toward polar residues. Residues Ser816, Ser828, Ser829, and Ser838 each carry the phosphoserine modification.

The protein belongs to the EIS1 family.

The protein localises to the cytoplasmic granule. Its subcellular location is the cell membrane. In terms of biological role, required for normal formation of eisosomes, large cytoplasmic protein assemblies that localize to specialized domains on plasma membrane and mark the site of endocytosis. This is Eisosome protein 1 (EIS1) from Saccharomyces cerevisiae (strain RM11-1a) (Baker's yeast).